The primary structure comprises 695 residues: DSC E3 ubiquitin ligase complex subunit 1 (695 aa).

The N-terminal stretch at 1 to 25 (MDRRRWVPSTPVVTLLLLFMLFAPA) is a signal peptide. The Lumenal segment spans residues 26–319 (PRLPSRNGES…KGPRNFVLEN (294 aa)). The helical transmembrane segment at 320 to 340 (HLVRFSSLYIFIVLSQIFVLL) threads the bilayer. Over 341-353 (RQMRINSPSHVQR) the chain is Cytoplasmic. The helical transmembrane segment at 354–374 (LSFLTIAMQAGLDAYIAIFFL) threads the bilayer. The Lumenal portion of the chain corresponds to 375-382 (STNAVIEK). The helical transmembrane segment at 383-403 (GYLPFVSVAFLSLVPSVMFTM) threads the bilayer. Residues 404–486 (RYLALILRVQ…QRDWSAVCLR (83 aa)) lie on the Cytoplasmic side of the membrane. The interval 419 to 473 (PPAPRPVTNNSSNNNTNQSNASNENSPNAPSAANDNTETTTVNPPQEDDQPMTQH) is disordered. Residues 427–454 (NNSSNNNTNQSNASNENSPNAPSAANDN) show a composition bias toward low complexity. A helical membrane pass occupies residues 487–507 (FYFIILVVCIASLYSAFWPVI). The Lumenal segment spans residues 508–509 (YR). Residues 510-530 (FYFISALIFTSYSFWIPQIIQ) form a helical membrane-spanning segment. At 531–540 (NVKQGTSRSF) the chain is on the cytoplasmic side. Residues 541–561 (TWTYILGASVLRLYLPLAIFI) form a helical membrane-spanning segment. The Lumenal portion of the chain corresponds to 562–572 (DSELILGFPPK). The chain crosses the membrane as a helical span at residues 573–593 (YFFALGLVLWMLFQVLVLLVQ). Over 594–695 (DTLGPRFFLP…PVCRCHLPAV (102 aa)) the chain is Cytoplasmic. The RING-type; atypical zinc finger occupies 634 to 689 (CPICMQPIELVSTGSTLNPASMMVRRNYMLTPCHHLYHRQCLLQWMETRSICPVCR).

Component of the DSC E3 ubiquitin ligase complex composed of dsc1, dsc2, dsc3 and dsc4.

Its subcellular location is the endoplasmic reticulum membrane. The protein localises to the golgi apparatus membrane. It catalyses the reaction S-ubiquitinyl-[E2 ubiquitin-conjugating enzyme]-L-cysteine + [acceptor protein]-L-lysine = [E2 ubiquitin-conjugating enzyme]-L-cysteine + N(6)-ubiquitinyl-[acceptor protein]-L-lysine.. It functions in the pathway protein modification; protein ubiquitination. In terms of biological role, catalytic component of the DSC E3 ubiquitin ligase complex which is required for the sre1 transcriptional activator proteolytic cleavage to release the soluble transcription factor from the membrane in low oxygen or sterol conditions. The complex also plays an important role in the multivesicular body (MVB) pathway and functions in a post-endoplasmic reticulum pathway for protein degradation. In Schizosaccharomyces pombe (strain 972 / ATCC 24843) (Fission yeast), this protein is DSC E3 ubiquitin ligase complex subunit 1 (dsc1).